A 302-amino-acid chain; its full sequence is Ribosomal RNA small subunit methyltransferase H (302 aa).

S-adenosyl-L-methionine is bound by residues 36–38 (GGH), Asp56, Phe84, Asp99, and Gln106.

This sequence belongs to the methyltransferase superfamily. RsmH family.

The protein resides in the cytoplasm. The catalysed reaction is cytidine(1402) in 16S rRNA + S-adenosyl-L-methionine = N(4)-methylcytidine(1402) in 16S rRNA + S-adenosyl-L-homocysteine + H(+). In terms of biological role, specifically methylates the N4 position of cytidine in position 1402 (C1402) of 16S rRNA. This chain is Ribosomal RNA small subunit methyltransferase H, found in Christiangramia forsetii (strain DSM 17595 / CGMCC 1.15422 / KT0803) (Gramella forsetii).